The chain runs to 1956 residues: Sodium channel protein type 10 subunit alpha (1956 aa).

Over 1 to 125 the chain is Cytoplasmic; that stretch reads MEFPIGSLET…FNLIRRTAIK (125 aa). The segment at 27-54 is disordered; the sequence is QIAAKQGTKKAREKHREQKDQEEKPRPQ. The span at 40-54 shows a compositional bias: basic and acidic residues; that stretch reads KHREQKDQEEKPRPQ. The I repeat unit spans residues 116 to 405; it reads FNLIRRTAIK…VTMAYEEQNQ (290 aa). Residues 126-149 traverse the membrane as a helical segment; the sequence is VSVHSWFSLFITVTILVNCVCMTR. The Extracellular segment spans residues 150–154; that stretch reads TDLPE. Residues 155–174 form a helical membrane-spanning segment; the sequence is KIEYVFTVIYTFEALIKILA. Residues 175-187 lie on the Cytoplasmic side of the membrane; it reads RGFCLNEFTYLRD. Residues 188–206 traverse the membrane as a helical segment; it reads PWNWLDFSVITLAYVGTAI. At 207–212 the chain is on the extracellular side; it reads DLRGIS. Residues 213-232 form a helical; Voltage-sensor membrane-spanning segment; the sequence is GLRTFRVLRALKTVSVIPGL. Residues 233–248 are Cytoplasmic-facing; the sequence is KVIVGALIHSVKKLAD. A helical transmembrane segment spans residues 249–272; that stretch reads VTILTIFCLSVFALVGLQLFKGNL. The Extracellular segment spans residues 273–341; the sequence is KNKCVKNDMA…PDFNYTSFDS (69 aa). Cysteines 276 and 319 form a disulfide. 4 N-linked (GlcNAc...) asparagine glycosylation sites follow: asparagine 284, asparagine 288, asparagine 312, and asparagine 335. Positions 342 to 366 form an intramembrane region, pore-forming; that stretch reads FAWAFLSLFRLMTQDSWERLYQQTL. Residues 367–373 lie on the Extracellular side of the membrane; it reads RTSGKIY. A helical transmembrane segment spans residues 374–399; the sequence is MIFFVLVIFLGSFYLVNLILAVVTMA. Residues 400-659 are Cytoplasmic-facing; it reads YEEQNQATTD…MWVKLKTILF (260 aa). Serine 441, serine 444, serine 467, and serine 479 each carry phosphoserine. Polar residues predominate over residues 443–454; it reads HSHNGSPLTSKN. Disordered regions lie at residues 443–485 and 500–580; these read HSHN…YNQR and SHGS…LAPG. The span at 561–570 shows a compositional bias: basic and acidic residues; sequence DSRHGEDEHQ. Phosphoserine occurs at positions 612 and 615. Residues 647 to 911 form an II repeat; the sequence is CCPMWVKLKT…EDDGEVNNLQ (265 aa). A helical membrane pass occupies residues 660 to 684; the sequence is GLVTDPFAELTITLCIVVNTIFMAM. Over 685-695 the chain is Extracellular; that stretch reads EHHGMSPTFEA. The helical transmembrane segment at 696–719 threads the bilayer; the sequence is MLQIGNIVFTIFFTAEMVFKIIAF. The Cytoplasmic segment spans residues 720-727; the sequence is DPYYYFQK. A helical membrane pass occupies residues 728 to 747; the sequence is KWNIFDCIIVTVSLLELGVA. Topologically, residues 748 to 753 are extracellular; that stretch reads KKGSLS. A helical; Voltage-sensor membrane pass occupies residues 754–773; that stretch reads VLRSFRLLRVFKLAKSWPTL. The Cytoplasmic segment spans residues 774–789; it reads NTLIKIIGNSVGALGN. The chain crosses the membrane as a helical span at residues 790–810; the sequence is LTIILAIIVFVFALVGKQLLG. The Extracellular portion of the chain corresponds to 811-834; sequence ENYRNNRKNISAPHEDWPRWHMHD. Asparagine 819 carries N-linked (GlcNAc...) asparagine glycosylation. The pore-forming intramembrane region spans 835–855; that stretch reads FFHSFLIVFRILCGEWIENMW. Residues 856–864 are Extracellular-facing; the sequence is ACMEVGQKS. A disulfide bond links cysteine 857 and cysteine 866. A helical transmembrane segment spans residues 865–890; the sequence is ICLILFLTVMVLGNLVVLNLFIALLL. At 891-1147 the chain is on the cytoplasmic side; sequence NSFSADNLTA…GWQVRKTCYR (257 aa). Disordered regions lie at residues 963 to 986 and 1041 to 1089; these read AANT…EHSD and DHLT…GSTV. The III repeat unit spans residues 1140–1449; sequence QVRKTCYRIV…KKYYNAMKKL (310 aa). The chain crosses the membrane as a helical span at residues 1148 to 1171; the sequence is IVEHSWFESFIIFMILLSSGSLAF. Topologically, residues 1172 to 1184 are extracellular; sequence EDYYLDQKPTVKA. A helical transmembrane segment spans residues 1185 to 1210; the sequence is LLEYTDRVFTFIFVFEMLLKWVAYGF. Residues 1211–1216 lie on the Cytoplasmic side of the membrane; the sequence is KKYFTN. Residues 1217-1238 form a helical membrane-spanning segment; sequence AWCWLDFLIVNISLISLTAKIL. Residues 1239-1242 lie on the Extracellular side of the membrane; the sequence is EYSE. The helical; Voltage-sensor transmembrane segment at 1243–1264 threads the bilayer; that stretch reads VAPIKALRTLRALRPLRALSRF. The Cytoplasmic segment spans residues 1265–1283; it reads EGMRVVVDALVGAIPSIMN. A helical transmembrane segment spans residues 1284 to 1311; the sequence is VLLVCLIFWLIFSIMGVNLFAGKFWRCI. N-linked (GlcNAc...) asparagine glycosylation is found at asparagine 1312, asparagine 1328, and asparagine 1336. Topologically, residues 1312–1353 are extracellular; that stretch reads NYTDGEFSLVPLSIVNNKSDCKIQNSTGSFFWVNVKVNFDNV. Residues 1354–1375 constitute an intramembrane region (pore-forming); that stretch reads AMGYLALLQVATFKGWMDIMYA. Topologically, residues 1376–1391 are extracellular; that stretch reads AVDSREVNMQPKWEDN. Residues 1392–1418 traverse the membrane as a helical segment; that stretch reads VYMYLYFVIFIIFGGFFTLNLFVGVII. Topologically, residues 1419 to 1471 are cytoplasmic; sequence DNFNQQKKKLGGQDIFMTEEQKKYYNAMKKLGSKKPQKPIPRPLNKFQGFVFD. Serine 1451 bears the Phosphoserine; by PKC mark. Residues 1458 to 1757 form an IV repeat; the sequence is IPRPLNKFQG…WEKFDPEATQ (300 aa). Residues 1472–1495 form a helical membrane-spanning segment; the sequence is IVTRQAFDITIMVLICLNMITMMV. Topologically, residues 1496–1506 are extracellular; the sequence is ETDDQSEEKTK. The helical transmembrane segment at 1507–1530 threads the bilayer; that stretch reads ILGKINQFFVAVFTGECVMKMFAL. At 1531 to 1536 the chain is on the cytoplasmic side; sequence RQYYFT. The chain crosses the membrane as a helical span at residues 1537 to 1560; that stretch reads NGWNVFDFIVVVLSIASLIFSAIL. At 1561–1572 the chain is on the extracellular side; sequence KSLQSYFSPTLF. Residues 1573–1594 traverse the membrane as a helical; Voltage-sensor segment; that stretch reads RVIRLARIGRILRLIRAAKGIR. Over 1595-1609 the chain is Cytoplasmic; it reads TLLFALMMSLPALFN. The chain crosses the membrane as a helical span at residues 1610–1632; the sequence is IGLLLFLVMFIYSIFGMSSFPHV. The Extracellular portion of the chain corresponds to 1633 to 1646; that stretch reads RWEAGIDDMFNFQT. Positions 1647 to 1669 form an intramembrane region, pore-forming; sequence FANSMLCLFQITTSAGWDGLLSP. Over 1670 to 1697 the chain is Extracellular; that stretch reads ILNTGPPYCDPNLPNSNGTRGDCGSPAV. Residue asparagine 1686 is glycosylated (N-linked (GlcNAc...) asparagine). A helical transmembrane segment spans residues 1698–1722; the sequence is GIIFFTTYIIISFLIMVNMYIAVIL. Topologically, residues 1723–1956 are cytoplasmic; that stretch reads ENFNVATEES…TSMELIAPGP (234 aa). The region spanning 1851-1880 is the IQ domain; that stretch reads EDISATVIQKAYRSYVLHRSMALSNTPCVP. The disordered stretch occupies residues 1909-1956; sequence SETASATSFPPSYESVTRGLSDRVNMRTSSSIQNEDEATSMELIAPGP.

It belongs to the sodium channel (TC 1.A.1.10) family. Nav1.8/SCN10A subfamily. The channel consists of an ion conducting pore forming alpha-subunit regulated by one or more associated auxiliary subunits SCN1B, SCN2B and SCN3B; electrophysiological properties may vary depending on the type of the associated beta subunits. Found in a number of complexes with PRX, DYNLT1 and PDZD2. Interacts with proteins such as FSTL1, PRX, DYNLT1, PDZD2, S100A10 and many others. Interacts with NEDD4 and NEDD4L. Ubiquitinated by NEDD4L; which promotes its endocytosis. Post-translationally, phosphorylation at Ser-1451 by PKC in a highly conserved cytoplasmic loop slows inactivation of the sodium channel and reduces peak sodium currents. In terms of processing, lacks the cysteine which covalently binds the conotoxin GVIIJ. This cysteine (position 816) is speculated in other sodium channel subunits alpha to be implied in covalent binding with the sodium channel subunit beta-2 or beta-4. Expressed in the dorsal root ganglia and sciatic nerve.

Its subcellular location is the cell membrane. It catalyses the reaction Na(+)(in) = Na(+)(out). In terms of biological role, tetrodotoxin-resistant channel that mediates the voltage-dependent sodium ion permeability of excitable membranes. Assuming opened or closed conformations in response to the voltage difference across the membrane, the protein forms a sodium-selective channel through which sodium ions may pass in accordance with their electrochemical gradient. Plays a role in neuropathic pain mechanisms. The sequence is that of Sodium channel protein type 10 subunit alpha from Homo sapiens (Human).